A 410-amino-acid polypeptide reads, in one-letter code: Peptidase T (410 aa).

Histidine 79 provides a ligand contact to Zn(2+). Aspartate 81 is an active-site residue. Aspartate 142 provides a ligand contact to Zn(2+). The active-site Proton acceptor is the glutamate 176. The Zn(2+) site is built by glutamate 177, aspartate 199, and histidine 381.

It belongs to the peptidase M20B family. It depends on Zn(2+) as a cofactor.

The protein resides in the cytoplasm. The enzyme catalyses Release of the N-terminal residue from a tripeptide.. Its function is as follows. Cleaves the N-terminal amino acid of tripeptides. The polypeptide is Peptidase T (Bacillus anthracis (strain A0248)).